The chain runs to 238 residues: Thiamine import ATP-binding protein ThiQ (238 aa).

In terms of domain architecture, ABC transporter spans 2-230; the sequence is LALDKVRYEY…HPHPELAQFV (229 aa). ATP is bound at residue 32 to 39; that stretch reads GPSGAGKS.

Belongs to the ABC transporter superfamily. Thiamine importer (TC 3.A.1.19.1) family. In terms of assembly, the complex is composed of two ATP-binding proteins (ThiQ), two transmembrane proteins (ThiP) and a solute-binding protein (ThiB).

It is found in the cell inner membrane. The enzyme catalyses thiamine(out) + ATP + H2O = thiamine(in) + ADP + phosphate + H(+). Part of the ABC transporter complex ThiBPQ involved in thiamine import. Responsible for energy coupling to the transport system. This chain is Thiamine import ATP-binding protein ThiQ, found in Vibrio cholerae serotype O1 (strain ATCC 39315 / El Tor Inaba N16961).